A 541-amino-acid chain; its full sequence is Chaperonin GroEL 1 (541 aa).

Residues 29-32 (TLGP), 86-90 (DGTTT), G413, 479-481 (NAA), and D495 each bind ATP.

The protein belongs to the chaperonin (HSP60) family. Forms a cylinder of 14 subunits composed of two heptameric rings stacked back-to-back. Interacts with the co-chaperonin GroES.

The protein localises to the cytoplasm. It catalyses the reaction ATP + H2O + a folded polypeptide = ADP + phosphate + an unfolded polypeptide.. Together with its co-chaperonin GroES, plays an essential role in assisting protein folding. The GroEL-GroES system forms a nano-cage that allows encapsulation of the non-native substrate proteins and provides a physical environment optimized to promote and accelerate protein folding. In Synechocystis sp. (strain ATCC 27184 / PCC 6803 / Kazusa), this protein is Chaperonin GroEL 1.